A 296-amino-acid chain; its full sequence is Non-selective voltage-gated ion channel VDAC2 (296 aa).

Lys-25 is a binding site for ATP. A Glycyl lysine isopeptide (Lys-Gly) (interchain with G-Cter in ubiquitin) cross-link involves residue Lys-25. Ser-26 bears the Phosphoserine mark. An ATP-binding site is contributed by Lys-33. N6-acetyllysine; alternate is present on Lys-33. At Lys-33 the chain carries N6-succinyllysine; alternate. Lys-33 is covalently cross-linked (Glycyl lysine isopeptide (Lys-Gly) (interchain with G-Cter in ubiquitin); alternate). 2 beta stranded membrane passes run 39-48 (LVKLDVKTKS) and 52-60 (VEFTTSGSS). Residues Lys-66 and Lys-74 each participate in a glycyl lysine isopeptide (Lys-Gly) (interchain with G-Cter in ubiquitin) cross-link. The beta stranded transmembrane segment at 67–77 (VNGSLETKYKW) threads the bilayer. Residue Tyr-80 is modified to Phosphotyrosine. The next 3 beta stranded transmembrane spans lie at 82–89 (LTFTEKWN), 93–102 (TLGTEIAIED), and 108–117 (LKLTFDTTFS). Thr-120 is subject to Phosphothreonine. Lys-122 carries the N6-acetyllysine; alternate modification. A Glycyl lysine isopeptide (Lys-Gly) (interchain with G-Cter in ubiquitin); alternate cross-link involves residue Lys-122. Residue Lys-123 forms a Glycyl lysine isopeptide (Lys-Gly) (interchain with G-Cter in ubiquitin) linkage. Transmembrane regions (beta stranded) follow at residues 124 to 133 (SGKIKSAYKR), 136 to 143 (LNLGCDVD), 150 to 158 (AIHGSAVFG), and 163 to 171 (LAGYQMTFD). Residue Lys-174 forms a Glycyl lysine isopeptide (Lys-Gly) (interchain with G-Cter in ubiquitin) linkage. The next 6 beta stranded transmembrane spans lie at 176–188 (KLTRNNFSVGYKT), 191–198 (FQLHTNVN), 202–211 (EFGGSIYQKV), 215–224 (LETAVNLAWT), 231–240 (RFGIAAKYKL), and 244–251 (ASISAKVN). Ser-206 is subject to Phosphoserine. Position 253 is a phosphoserine (Ser-253). NAD(+) contacts are provided by residues 255-257 (LVG) and 273-277 (SALID). 2 beta stranded membrane-spanning segments follow: residues 255–264 (LVGVGYTQTL) and 267–276 (GVKLTLSALI). Residue Lys-279 is modified to N6-acetyllysine; alternate. Lys-279 is covalently cross-linked (Glycyl lysine isopeptide (Lys-Gly) (interchain with G-Cter in ubiquitin); alternate). A beta stranded transmembrane segment spans residues 286–295 (HKLGLGLELE). Lys-287 participates in a covalent cross-link: Glycyl lysine isopeptide (Lys-Gly) (interchain with G-Cter in ubiquitin).

The protein belongs to the eukaryotic mitochondrial porin family. Monomer, homodimer and higher order oligomers; formation of higher order structures is necessary for scramblase activity. In terms of processing, ubiquitinated by PRKN during mitophagy, leading to its degradation and enhancement of mitophagy. Deubiquitinated by USP30.

It is found in the mitochondrion outer membrane. It localises to the membrane. The enzyme catalyses chloride(in) = chloride(out). The catalysed reaction is K(+)(in) = K(+)(out). It catalyses the reaction a 1,2-diacyl-sn-glycero-3-phospho-L-serine(in) = a 1,2-diacyl-sn-glycero-3-phospho-L-serine(out). It carries out the reaction a 1,2-diacyl-sn-glycero-3-phosphocholine(in) = a 1,2-diacyl-sn-glycero-3-phosphocholine(out). The enzyme catalyses a 1,2-diacyl-sn-glycero-3-phospho-(1D-myo-inositol)(in) = a 1,2-diacyl-sn-glycero-3-phospho-(1D-myo-inositol)(out). Non-selective voltage-gated ion channel that mediates the transport of anions and cations through the mitochondrion outer membrane and plasma membrane. The channel adopts an open conformation at zero mV and a closed conformation at both positive and negative potentials. There are two populations of channels; the main that functions in a lower open-state conductance with lower ion selectivity, that switch, in a voltage-dependent manner, from the open to a low-conducting 'closed' state and the other that has a normal ion selectivity in the typical high conductance, 'open' state. Binds various lipids, including the sphingolipid ceramide, the phospholipid phosphatidylcholine, and the sterols cholesterol and oxysterol. Binding of ceramide promotes the mitochondrial outer membrane permeabilization (MOMP) apoptotic pathway. Functionally, catalyzes the scrambling of phospholipids across the outer mitochondrial membrane; the mechanism is unrelated to channel activity and is capable of translocating both anionic and zwitterionic phospholipids. The protein is Non-selective voltage-gated ion channel VDAC2 of Meleagris gallopavo (Wild turkey).